A 195-amino-acid chain; its full sequence is Pyridoxal 5'-phosphate synthase subunit PdxT (195 aa).

Position 46 to 48 (46 to 48 (GES)) interacts with L-glutamine. The active-site Nucleophile is the Cys78. L-glutamine-binding positions include Arg107 and 136-137 (IR). Residues His173 and Glu175 each act as charge relay system in the active site.

The protein belongs to the glutaminase PdxT/SNO family. As to quaternary structure, in the presence of PdxS, forms a dodecamer of heterodimers. Only shows activity in the heterodimer.

The enzyme catalyses aldehydo-D-ribose 5-phosphate + D-glyceraldehyde 3-phosphate + L-glutamine = pyridoxal 5'-phosphate + L-glutamate + phosphate + 3 H2O + H(+). It catalyses the reaction L-glutamine + H2O = L-glutamate + NH4(+). Its pathway is cofactor biosynthesis; pyridoxal 5'-phosphate biosynthesis. Its function is as follows. Catalyzes the hydrolysis of glutamine to glutamate and ammonia as part of the biosynthesis of pyridoxal 5'-phosphate. The resulting ammonia molecule is channeled to the active site of PdxS. The polypeptide is Pyridoxal 5'-phosphate synthase subunit PdxT (Dehalococcoides mccartyi (strain ATCC BAA-2266 / KCTC 15142 / 195) (Dehalococcoides ethenogenes (strain 195))).